Reading from the N-terminus, the 992-residue chain is Meckelin (992 aa).

A signal peptide spans 1-36; that stretch reads MVTRTRPVAAMAVRSRSSSRTGTAYLLLVLCEVSWA. Positions 37–280 are cysteine-rich; the sequence is QIFSFPFRRP…FHYIFESTAG (244 aa). At 37–516 the chain is on the extracellular side; that stretch reads QIFSFPFRRP…SVKYEMNQGD (480 aa). Intrachain disulfides connect C49–C62, C65–C78, C80–C97, C100–C114, C117–C127, C129–C150, C153–C170, C173–C184, C186–C197, C237–C246, C253–C268, and C354–C375. N242 carries an N-linked (GlcNAc...) asparagine glycan. The chain crosses the membrane as a helical span at residues 517–545; it reads ASVHTDIALGVLGGLAVLSSLLKTAGWKR. Residues 546–555 lie on the Cytoplasmic side of the membrane; the sequence is RVGSPMIDLQ. A helical membrane pass occupies residues 556–587; the sequence is TVMKFLLYYAGDLANVFFIITVGTGLYWLIFF. Residues 588–600 lie on the Extracellular side of the membrane; that stretch reads KAQKSVSVLLPMP. The helical transmembrane segment at 601–628 threads the bilayer; sequence VQEERFVTYVGCAFAMKALQFLHKFISQ. Residues 629 to 667 are Cytoplasmic-facing; that stretch reads ISIDIFFIDWERPKGKVLKAVEGEGGVRSATVPVSIWRT. An intramembrane region (helical) is located at residues 668-676; sequence YFVANEWNE. Residues 668 to 698 traverse the membrane as a discontinuously helical segment; the sequence is YFVANEWNEIQTVRKINPLFQVLTTLFFLEV. An intramembrane segment occupies 677 to 685; sequence IQTVRKINP. The segment at residues 686-698 is an intramembrane region (helical); the sequence is LFQVLTTLFFLEV. At 699-728 the chain is on the extracellular side; that stretch reads VGFKNLALMDSSSSLSRNPSDYTAPYSRIL. Positions 729–754 form an intramembrane region, helical; the sequence is RYAVATAIWLVIGIIQVVFFAAFYER. The chain crosses the membrane as a discontinuously helical span at residues 729-768; it reads RYAVATAIWLVIGIIQVVFFAAFYERFIEDKIRQFVDLCS. Residues 755-759 lie within the membrane without spanning it; it reads FIEDK. The segment at residues 760–768 is an intramembrane region (helical); the sequence is IRQFVDLCS. The Cytoplasmic portion of the chain corresponds to 769–923; that stretch reads MSNVSVFLLS…SIFYNDEGHS (155 aa). Residues 924-926 constitute an intramembrane region (helical); sequence FSS. The chain crosses the membrane as a discontinuously helical span at residues 924-949; that stretch reads FSSVLYYGNEATLLIFDLLFFCVVDL. The stretch at 927–933 is an intramembrane region; it reads VLYYGNE. An intramembrane region (helical) is located at residues 934 to 949; sequence ATLLIFDLLFFCVVDL. The Extracellular segment spans residues 950-954; it reads ACQDF. Residues 955-982 traverse the membrane as a helical segment; sequence VLASFLTYLQQEIFRFIRNTVGQKNLAT. Topologically, residues 983–992 are cytoplasmic; the sequence is KTLVDERFLI.

In terms of assembly, homodimer. Part of the tectonic-like complex (also named B9 complex). Interacts with DNAJB9, DNAJC10 and mutated SFTPC. Interacts with SYNE2 during the early establishment of cell polarity. Interacts (via C-terminus) with FLNA. Interacts with TMEM218. Interacts with WNT5A. Interacts with ROR2.

It is found in the cell membrane. Its subcellular location is the endoplasmic reticulum membrane. The protein resides in the cytoplasm. It localises to the cytoskeleton. The protein localises to the cilium basal body. Functionally, part of the tectonic-like complex which is required for tissue-specific ciliogenesis and may regulate ciliary membrane composition. Involved in centrosome migration to the apical cell surface during early ciliogenesis. Required for ciliary structure and function, including a role in regulating length and appropriate number through modulating centrosome duplication. Is a key regulator of stereociliary bundle orientation. Required for epithelial cell branching morphology. Essential for endoplasmic reticulum-associated degradation (ERAD) of surfactant protein C (sftpc). Involved in the negative regulation of canonical Wnt signaling, and activation of the non-canonical cascade stimulated by WNT5A. In non-canonical Wnt signaling, it may act as ROR2 coreceptor. In Mus musculus (Mouse), this protein is Meckelin (Tmem67).